We begin with the raw amino-acid sequence, 997 residues long: Pro-apoptotic serine protease NMA111 (997 aa).

The segment at 1 to 43 (MTISLSNIKKRDHSKISDGTSGESSLVKRKQLESATGDQEEEY) is disordered. Positions 83–273 (VVSIHFSQVA…LPLDRILRAL (191 aa)) are serine protease. Active-site charge relay system residues include His-121, Asp-152, and Ser-235. 2 consecutive PDZ domains span residues 300-378 (RRLG…QRGG) and 779-854 (EEWI…VRDG).

The protein belongs to the peptidase S1C family. As to quaternary structure, interacts with BIR1.

It is found in the nucleus. Its function is as follows. Nuclear serine protease which mediates apoptosis through proteolysis of the apoptotic inhibitor BIR1. The sequence is that of Pro-apoptotic serine protease NMA111 (NMA111) from Saccharomyces cerevisiae (strain YJM789) (Baker's yeast).